We begin with the raw amino-acid sequence, 646 residues long: Phosphomethylpyrimidine synthase (646 aa).

Substrate contacts are provided by residues asparagine 235, methionine 264, tyrosine 293, histidine 329, 349–351 (SRG), 390–393 (DGLR), and glutamate 429. Histidine 433 contacts Zn(2+). A substrate-binding site is contributed by tyrosine 456. Histidine 497 contacts Zn(2+). Residues cysteine 577, cysteine 580, and cysteine 585 each contribute to the [4Fe-4S] cluster site.

The protein belongs to the ThiC family. Homodimer. It depends on [4Fe-4S] cluster as a cofactor.

It carries out the reaction 5-amino-1-(5-phospho-beta-D-ribosyl)imidazole + S-adenosyl-L-methionine = 4-amino-2-methyl-5-(phosphooxymethyl)pyrimidine + CO + 5'-deoxyadenosine + formate + L-methionine + 3 H(+). Its pathway is cofactor biosynthesis; thiamine diphosphate biosynthesis. In terms of biological role, catalyzes the synthesis of the hydroxymethylpyrimidine phosphate (HMP-P) moiety of thiamine from aminoimidazole ribotide (AIR) in a radical S-adenosyl-L-methionine (SAM)-dependent reaction. This is Phosphomethylpyrimidine synthase from Vibrio campbellii (strain ATCC BAA-1116).